We begin with the raw amino-acid sequence, 395 residues long: Phosphoglycerate kinase (395 aa).

Substrate is bound by residues 22–24 (DLN), arginine 37, 60–63 (HFGR), arginine 116, and arginine 149. Residues lysine 199, glutamate 322, and 352–355 (GGDT) contribute to the ATP site.

Belongs to the phosphoglycerate kinase family. Monomer.

Its subcellular location is the cytoplasm. It carries out the reaction (2R)-3-phosphoglycerate + ATP = (2R)-3-phospho-glyceroyl phosphate + ADP. It functions in the pathway carbohydrate degradation; glycolysis; pyruvate from D-glyceraldehyde 3-phosphate: step 2/5. The protein is Phosphoglycerate kinase of Novosphingobium aromaticivorans (strain ATCC 700278 / DSM 12444 / CCUG 56034 / CIP 105152 / NBRC 16084 / F199).